Here is a 104-residue protein sequence, read N- to C-terminus: uncharacterized protein (104 aa).

Positions 55 to 104 (RPFSSDRINRPFSPDKKGEPIFPDKRDRPFSPDRINRPFSPDKKGEPIFP) are disordered.

The protein localises to the plastid. This is an uncharacterized protein from Euglena longa (Euglenophycean alga).